The sequence spans 309 residues: Tagatose-6-phosphate kinase (309 aa).

The protein belongs to the carbohydrate kinase PfkB family. LacC subfamily.

It catalyses the reaction D-tagatofuranose 6-phosphate + ATP = D-tagatofuranose 1,6-bisphosphate + ADP + H(+). It participates in carbohydrate metabolism; D-tagatose 6-phosphate degradation; D-glyceraldehyde 3-phosphate and glycerone phosphate from D-tagatose 6-phosphate: step 1/2. The sequence is that of Tagatose-6-phosphate kinase from Streptococcus pneumoniae (strain Hungary19A-6).